The following is a 74-amino-acid chain: Protein SlyX homolog (74 aa).

The segment at 54 to 74 (QDRNPDAQEPYSLRDEIPPHY) is disordered.

The protein belongs to the SlyX family.

The protein is Protein SlyX homolog of Neisseria gonorrhoeae (strain ATCC 700825 / FA 1090).